A 276-amino-acid chain; its full sequence is Glutamate 5-kinase (276 aa).

K14 provides a ligand contact to ATP. Residues S54, D141, and N157 each coordinate substrate. ATP contacts are provided by residues S177–D178 and T219–K225.

This sequence belongs to the glutamate 5-kinase family.

It is found in the cytoplasm. The catalysed reaction is L-glutamate + ATP = L-glutamyl 5-phosphate + ADP. It functions in the pathway amino-acid biosynthesis; L-proline biosynthesis; L-glutamate 5-semialdehyde from L-glutamate: step 1/2. In terms of biological role, catalyzes the transfer of a phosphate group to glutamate to form L-glutamate 5-phosphate. The protein is Glutamate 5-kinase of Listeria monocytogenes serotype 4a (strain HCC23).